A 109-amino-acid polypeptide reads, in one-letter code: Nascent polypeptide-associated complex protein (109 aa).

Positions 3 to 69 (PMNPKQLKKL…TEEERVVLKI (67 aa)) constitute an NAC-A/B domain.

Belongs to the NAC-alpha family. In terms of assembly, homodimer. Interacts with the ribosome. Binds ribosomal RNA.

Contacts the emerging nascent chain on the ribosome. This Pyrococcus abyssi (strain GE5 / Orsay) protein is Nascent polypeptide-associated complex protein.